A 204-amino-acid polypeptide reads, in one-letter code: Lipid A acyltransferase PagP (204 aa).

The signal sequence occupies residues 1 to 25 (MSYKHLISACIFSSLCLGQVNAVLA). Residues His-76, Asp-119, and Ser-120 contribute to the active site.

It belongs to the lipid A palmitoyltransferase family. In terms of assembly, homodimer.

Its subcellular location is the cell outer membrane. The catalysed reaction is a lipid A + a 1,2-diacyl-sn-glycero-3-phosphocholine = a hepta-acyl lipid A + a 2-acyl-sn-glycero-3-phosphocholine. It carries out the reaction a lipid IVA + a 1,2-diacyl-sn-glycero-3-phosphocholine = a lipid IVB + a 2-acyl-sn-glycero-3-phosphocholine. The enzyme catalyses a lipid IIA + a 1,2-diacyl-sn-glycero-3-phosphocholine = a lipid IIB + a 2-acyl-sn-glycero-3-phosphocholine. Functionally, transfers a fatty acid residue from the sn-1 position of a phospholipid to the N-linked hydroxyfatty acid chain on the proximal unit of lipid A or its precursors. In Yersinia enterocolitica serotype O:8 / biotype 1B (strain NCTC 13174 / 8081), this protein is Lipid A acyltransferase PagP.